A 198-amino-acid chain; its full sequence is MAELEAKKVEIVDPAPPAPGPVEAPKEVVADEKAIVAPALPPPAEEKEKPDDSKALVVVETKAPEPADEKKEGSIDRDAVLARVATEKRVSLIKAWEESEKSKAENKAQKKVSAIGAWENSKKANLEAELKKMEEQLEKKKAEYTEKMKNKIALLHKEAEEKRAMIEAKRGEDLLKAEELAAKYRATGTAPKKILGIF.

Over residues 1–11 the composition is skewed to basic and acidic residues; it reads MAELEAKKVEI. The interval 1-24 is disordered; the sequence is MAELEAKKVEIVDPAPPAPGPVEA. A coiled-coil region spans residues 97 to 184; sequence EESEKSKAEN…LKAEELAAKY (88 aa).

This sequence belongs to the remorin family. Post-translationally, the N-terminus is blocked. Phosphorylated.

Its subcellular location is the cell membrane. In terms of biological role, binds to both simple and complex galacturonides. May be involved in cell-to-cell signaling and molecular transport. The protein is Remorin of Solanum tuberosum (Potato).